The primary structure comprises 353 residues: Cyclic GMP-AMP synthase-like receptor (353 aa).

ATP is bound by residues Ser-60 and 72–74 (EYD). Mg(2+) is bound by residues Glu-72, Asp-74, and Asp-183. Asp-183 serves as a coordination point for GTP. Lys-245 contributes to the ATP binding site. 2 residues coordinate Mn(2+): Leu-269 and Glu-270.

It belongs to the mab-21 family. Mg(2+) is required as a cofactor. It depends on Mn(2+) as a cofactor.

It carries out the reaction GTP + ATP = 2',3'-cGAMP + 2 diphosphate. It catalyses the reaction GTP + ATP = pppGp(2'-5')A + diphosphate. The enzyme catalyses pppGp(2'-5')A = 2',3'-cGAMP + diphosphate. Its function is as follows. Nucleotidyltransferase that catalyzes the formation of cyclic GMP-AMP (2',3'-cGAMP) from ATP and GTP and plays a key role in innate immunity. Acts as a key sensor of double-stranded RNA (dsRNA), the presence of dsRNA in the cytoplasm being a danger signal that triggers the immune responses. Directly binds dsRNA, activating the nucleotidyltransferase activity, leading to synthesis of 2',3'-cGAMP, a second messenger that binds to and activates Sting, thereby triggering the immune response via activation of the NF-kappa-B transcription factor. The chain is Cyclic GMP-AMP synthase-like receptor from Nicrophorus vespilloides (Boreal carrion beetle).